The sequence spans 118 residues: Large ribosomal subunit protein bL20 (118 aa).

It belongs to the bacterial ribosomal protein bL20 family.

Binds directly to 23S ribosomal RNA and is necessary for the in vitro assembly process of the 50S ribosomal subunit. It is not involved in the protein synthesizing functions of that subunit. The polypeptide is Large ribosomal subunit protein bL20 (Erwinia tasmaniensis (strain DSM 17950 / CFBP 7177 / CIP 109463 / NCPPB 4357 / Et1/99)).